Consider the following 534-residue polypeptide: MAAKYIFVTGGVVSSLGKGITAASLGRLLKNRGLKVTIQKFDPYINVDPGTMSPYQHGEVFVTDDGAETDLDLGHYERFIDINLSQNSNITTGRVYSTVLKKERRGDYLGGTVQVIPHVTNEIKERVFRAGRETGADVVITEIGGTVGDIESLPFLEAIRQIKSDVGMENVLYLHCTLIPYLKAAGEMKSKPTQHSVKELRSLGIQPNVIVVRTERKVPQDMKDKIALFCDIKKEAVIEAWDADTLYQVPLDLQAQNLDQIVCDHLQLNCPEANMTEWKELVNRVSHLSEKVRIAIVGKYVELQDAYLSVAEALRHAGYHVDADIDIDWVYAEQVNDENVDELLNKADGILVPGGFGDRGIEGKITAIRYARENKVPFLGICLGMQLASVEFARTVLGLKGANSAELNPQTPYPIIDLLPEQKDVEDLGGTLRLGLYPCKLQEGTAARAAYGEEVVYERHRHRYEFNNEYREQMEKAGFVFSGTSPDGRLVEVIEVTDHPFFVASQFHPEFVSRPTRPQPLFREFVRNALAAQA.

Residues methionine 1 to leucine 268 form an amidoligase domain region. A CTP-binding site is contributed by serine 14. Serine 14 serves as a coordination point for UTP. Serine 15 to isoleucine 20 provides a ligand contact to ATP. Residue tyrosine 55 participates in L-glutamine binding. Aspartate 72 lines the ATP pocket. The Mg(2+) site is built by aspartate 72 and glutamate 142. Residues aspartate 149–glutamate 151, lysine 189–glutamine 194, and lysine 225 each bind CTP. Residues lysine 189 to glutamine 194 and lysine 225 each bind UTP. Residues arginine 293–alanine 534 form the Glutamine amidotransferase type-1 domain. Glycine 355 is a binding site for L-glutamine. Catalysis depends on cysteine 382, which acts as the Nucleophile; for glutamine hydrolysis. Residues leucine 383–glutamine 386, glutamate 406, and arginine 463 contribute to the L-glutamine site. Residues histidine 508 and glutamate 510 contribute to the active site.

It belongs to the CTP synthase family. Homotetramer.

It catalyses the reaction UTP + L-glutamine + ATP + H2O = CTP + L-glutamate + ADP + phosphate + 2 H(+). The enzyme catalyses L-glutamine + H2O = L-glutamate + NH4(+). The catalysed reaction is UTP + NH4(+) + ATP = CTP + ADP + phosphate + 2 H(+). It functions in the pathway pyrimidine metabolism; CTP biosynthesis via de novo pathway; CTP from UDP: step 2/2. Allosterically activated by GTP, when glutamine is the substrate; GTP has no effect on the reaction when ammonia is the substrate. The allosteric effector GTP functions by stabilizing the protein conformation that binds the tetrahedral intermediate(s) formed during glutamine hydrolysis. Inhibited by the product CTP, via allosteric rather than competitive inhibition. Catalyzes the ATP-dependent amination of UTP to CTP with either L-glutamine or ammonia as the source of nitrogen. Regulates intracellular CTP levels through interactions with the four ribonucleotide triphosphates. This Shouchella clausii (strain KSM-K16) (Alkalihalobacillus clausii) protein is CTP synthase.